The sequence spans 145 residues: Hemoglobin subunit beta-A (145 aa).

A Globin domain is found at 1–145 (MLTAEEKAAV…VANALAHRYH (145 aa)). Heme b is bound by residues histidine 62 and histidine 91.

The protein belongs to the globin family. As to quaternary structure, heterotetramer of two alpha chains and two beta chains. Red blood cells.

In terms of biological role, involved in oxygen transport from the lung to the various peripheral tissues. This chain is Hemoglobin subunit beta-A, found in Bos javanicus (Wild banteng).